The sequence spans 234 residues: Transcriptional regulatory protein WalR (234 aa).

The Response regulatory domain occupies 3 to 116 (KILIVDDEKP…ELQARVKALL (114 aa)). D52 bears the 4-aspartylphosphate mark. The ompR/PhoB-type DNA-binding region spans 133-232 (PQPIQIGDLE…RRGVGYYMRN (100 aa)).

In terms of assembly, monomer. Homodimer. Phosphorylated by WalK; can also be dephosphorylated by WalK.

It is found in the cytoplasm. In terms of biological role, member of the two-component regulatory system WalK/WalR that regulates genes involved in cell wall metabolism. Binds to the promoter region of the transcription factor fabT gene in the fabTH-acp operon in vitro. Inhibits transcription of fabT, probably acting in an unphosphorylated form, thereby playing a role in the regulation of fatty acid biosynthesis. Essential for normal growth in vitro. Required for maintaining normal cellular morphology, acting, at least in part, by regulating peptidoglycan hydrolase pcsB. Involved in maintaining expression of WalRK regulon genes in exponentially growing cells. In Streptococcus pneumoniae serotype 2 (strain D39 / NCTC 7466), this protein is Transcriptional regulatory protein WalR.